Here is a 370-residue protein sequence, read N- to C-terminus: 3-isopropylmalate dehydrogenase (370 aa).

77–90 (GPKWDAVPYEVRPE) serves as a coordination point for NAD(+). Substrate-binding residues include R97, R107, R135, and D226. Mg(2+) is bound by residues D226, D250, and D254. NAD(+) is bound at residue 290–302 (GSAPDIAGTGVAN).

This sequence belongs to the isocitrate and isopropylmalate dehydrogenases family. LeuB type 1 subfamily. In terms of assembly, homodimer. It depends on Mg(2+) as a cofactor. Mn(2+) serves as cofactor.

It localises to the cytoplasm. It carries out the reaction (2R,3S)-3-isopropylmalate + NAD(+) = 4-methyl-2-oxopentanoate + CO2 + NADH. The protein operates within amino-acid biosynthesis; L-leucine biosynthesis; L-leucine from 3-methyl-2-oxobutanoate: step 3/4. Catalyzes the oxidation of 3-carboxy-2-hydroxy-4-methylpentanoate (3-isopropylmalate) to 3-carboxy-4-methyl-2-oxopentanoate. The product decarboxylates to 4-methyl-2 oxopentanoate. This is 3-isopropylmalate dehydrogenase from Rhizobium meliloti (strain 1021) (Ensifer meliloti).